We begin with the raw amino-acid sequence, 347 residues long: Trace amine-associated receptor 4 (347 aa).

Residues 1-37 (MNTPDPWSSPEVQFCFAAANSSCPRKARPALVVCAMY) are Extracellular-facing. Asn-20 carries N-linked (GlcNAc...) asparagine glycosylation. Intrachain disulfides connect Cys-23–Cys-187 and Cys-106–Cys-191. Residues 38–58 (LIMIGAIVMTMLGNMAVIISI) form a helical membrane-spanning segment. The Cytoplasmic segment spans residues 59-69 (AHFKQLHSPTN). Residues 70–90 (FLILSMATTDFLLSCVVMPFS) form a helical membrane-spanning segment. At 91–110 (MIRSIESCWYFGDLFCKVHS) the chain is on the extracellular side. A helical membrane pass occupies residues 111 to 129 (CCDIMLCTTSIFHLCFISV). The Cytoplasmic portion of the chain corresponds to 130-149 (DRHYAVCDPLHYVTQITTRV). A helical membrane pass occupies residues 150–170 (VGVFLLISWSVPIFFAFGLVF). The Extracellular portion of the chain corresponds to 171–197 (SELNLIGAEDFVAAIDCTGLCVLIFNK). Positions 175-188 (LIGAEDFVAAIDCT) are extracellular Loop 2 (ECL2). Residues 198 to 218 (LWGVLASFIAFFLPGTVMVGI) traverse the membrane as a helical segment. Topologically, residues 219–260 (YIHIFTVAQKHARQIGTGPRTKQALSESKMKATSKKESKATK) are cytoplasmic. The chain crosses the membrane as a helical span at residues 261–281 (TLSIVMGVFVLCWLPFFVLTI). Topologically, residues 282–296 (TDPFIDFTTPEDLYN) are extracellular. Residues 297 to 317 (VFLWLGYFNSTFNPIIYGMFY) traverse the membrane as a helical segment. At 318–347 (PWFRKALRMIVTGTIFRSDSSTSSLHPAHP) the chain is on the cytoplasmic side.

This sequence belongs to the G-protein coupled receptor 1 family. In terms of tissue distribution, specifically expressed in neurons of the olfactory epithelium, to discrete glomeruli predominantly localized to a confined bulb region. Present in the dorsal area of the main olfactory epithelium.

It localises to the cell membrane. In terms of biological role, olfactory receptor specific for 2-phenylethylamine, a trace amine present at high concentration in the urine of carnivore species, playing a key role in fear and avoidance responses. 2-phenylethylamine acts as a kairomone in the chemical detection of carnivore odor and triggers fear in mice. This receptor is probably mediated by the G(s)-class of G-proteins which activate adenylate cyclase. The protein is Trace amine-associated receptor 4 of Mus musculus (Mouse).